The sequence spans 463 residues: Aromatic amino acid transport protein AroP (463 aa).

Helical transmembrane passes span 18 to 38, 40 to 60, 84 to 104, 117 to 137, 157 to 177, 200 to 220, 237 to 257, 276 to 296, 337 to 357, 358 to 378, 402 to 422, and 431 to 451; these read TMMG…GVGI, AAGP…VLVM, FGHW…IMVM, AWFG…FAVV, VAVI…WLPG, VAAG…VTIA, AVIW…TFLM, ILAM…IVLA, AVLL…WNPA, GLLD…WAMI, AHPW…ALML, and VYSV…TVNS.

It belongs to the amino acid-polyamine-organocation (APC) superfamily. Amino acid transporter (AAT) (TC 2.A.3.1) family.

The protein localises to the cell membrane. The enzyme catalyses L-phenylalanine(in) + H(+)(in) = L-phenylalanine(out) + H(+)(out). It catalyses the reaction L-tryptophan(in) + H(+)(in) = L-tryptophan(out) + H(+)(out). It carries out the reaction L-tyrosine(in) + H(+)(in) = L-tyrosine(out) + H(+)(out). In terms of biological role, permease that is involved in the active transport across the cytoplasmic membrane of all three aromatic amino acids, phenylalanine, tyrosine and tryptophan. This is Aromatic amino acid transport protein AroP from Corynebacterium glutamicum (strain ATCC 13032 / DSM 20300 / JCM 1318 / BCRC 11384 / CCUG 27702 / LMG 3730 / NBRC 12168 / NCIMB 10025 / NRRL B-2784 / 534).